Here is a 604-residue protein sequence, read N- to C-terminus: UvrABC system protein C (604 aa).

In terms of domain architecture, GIY-YIG spans 17–95; the sequence is AQPGVYRMLN…IKSLAPRYNI (79 aa). The region spanning 204 to 239 is the UVR domain; sequence DEVLKTIEQKMFTASDQQDYEQAAQLRDQMQALRKI.

This sequence belongs to the UvrC family. Interacts with UvrB in an incision complex.

Its subcellular location is the cytoplasm. Functionally, the UvrABC repair system catalyzes the recognition and processing of DNA lesions. UvrC both incises the 5' and 3' sides of the lesion. The N-terminal half is responsible for the 3' incision and the C-terminal half is responsible for the 5' incision. This is UvrABC system protein C from Nitrosomonas europaea (strain ATCC 19718 / CIP 103999 / KCTC 2705 / NBRC 14298).